A 340-amino-acid chain; its full sequence is Glycerol-3-phosphate dehydrogenase [NAD(P)+] (340 aa).

NADPH-binding residues include S12, W13, K34, and K107. Residues K107, G138, and S140 each contribute to the sn-glycerol 3-phosphate site. A142 provides a ligand contact to NADPH. 5 residues coordinate sn-glycerol 3-phosphate: K193, D246, S256, R257, and N258. K193 acts as the Proton acceptor in catalysis. An NADPH-binding site is contributed by R257. NADPH is bound by residues I281 and E283.

Belongs to the NAD-dependent glycerol-3-phosphate dehydrogenase family.

It is found in the cytoplasm. The enzyme catalyses sn-glycerol 3-phosphate + NAD(+) = dihydroxyacetone phosphate + NADH + H(+). It carries out the reaction sn-glycerol 3-phosphate + NADP(+) = dihydroxyacetone phosphate + NADPH + H(+). It participates in membrane lipid metabolism; glycerophospholipid metabolism. Functionally, catalyzes the reduction of the glycolytic intermediate dihydroxyacetone phosphate (DHAP) to sn-glycerol 3-phosphate (G3P), the key precursor for phospholipid synthesis. This Enterococcus faecalis (strain ATCC 700802 / V583) protein is Glycerol-3-phosphate dehydrogenase [NAD(P)+].